The following is a 78-amino-acid chain: Sec-independent protein translocase protein TatA (78 aa).

A helical transmembrane segment spans residues 1–21 (MGGISIWQLLIIAVIVVLLFG). Residues 47–59 (ESEKKDADFEPKS) are compositionally biased toward basic and acidic residues. The segment at 47 to 78 (ESEKKDADFEPKSLEQQSKQAATESKKDKEQA) is disordered. The span at 60 to 69 (LEQQSKQAAT) shows a compositional bias: polar residues.

The protein belongs to the TatA/E family. The Tat system comprises two distinct complexes: a TatABC complex, containing multiple copies of TatA, TatB and TatC subunits, and a separate TatA complex, containing only TatA subunits. Substrates initially bind to the TatABC complex, which probably triggers association of the separate TatA complex to form the active translocon.

It localises to the cell inner membrane. Its function is as follows. Part of the twin-arginine translocation (Tat) system that transports large folded proteins containing a characteristic twin-arginine motif in their signal peptide across membranes. TatA could form the protein-conducting channel of the Tat system. The sequence is that of Sec-independent protein translocase protein TatA from Vibrio vulnificus (strain CMCP6).